Here is a 380-residue protein sequence, read N- to C-terminus: PqqA peptide cyclase (380 aa).

Positions phenylalanine 12 to arginine 228 constitute a Radical SAM core domain. [4Fe-4S] cluster-binding residues include cysteine 26, cysteine 30, and cysteine 33.

It belongs to the radical SAM superfamily. PqqE family. As to quaternary structure, interacts with PqqD. The interaction is necessary for activity of PqqE. [4Fe-4S] cluster is required as a cofactor.

It carries out the reaction [PQQ precursor protein] + S-adenosyl-L-methionine = E-Y cross-linked-[PQQ precursor protein] + 5'-deoxyadenosine + L-methionine + H(+). Its pathway is cofactor biosynthesis; pyrroloquinoline quinone biosynthesis. Its function is as follows. Catalyzes the cross-linking of a glutamate residue and a tyrosine residue in the PqqA protein as part of the biosynthesis of pyrroloquinoline quinone (PQQ). The polypeptide is PqqA peptide cyclase (Bradyrhizobium diazoefficiens (strain JCM 10833 / BCRC 13528 / IAM 13628 / NBRC 14792 / USDA 110)).